The primary structure comprises 45 residues: NLR family pyrin domain-containing protein 2B (45 aa).

As to expression, expressed in all tissues tested, including spleen, lymph node, thymus, tonsil, peripheral blood leukocyte, bone marrow, liver, heart, brain, placenta, lung, skeletal muscle, kidney and pancreas.

It is found in the cytoplasm. The protein localises to the nucleus. May function as a negative regulator of NF-kappa-B by preventing RELA/p65 phosphorylation at 'Ser-536', thereby inhibiting its transcriptional activity. Through NF-kappa-B regulation may control cytokine release upon Toll-like receptors activation and therefore play a role in modulation of innate immunity. May also play a role in cell cycle progression and apoptotic process. The chain is NLR family pyrin domain-containing protein 2B from Homo sapiens (Human).